Consider the following 345-residue polypeptide: Putative membrane protein ORF59 (345 aa).

4 consecutive transmembrane segments (helical) span residues 46–63, 101–118, 147–165, and 265–286; these read LVFAYVTLVLLYVIMMLI, IVFVALGVNFLLVILVFL, IFGIMSFIFVFIITVFSIL, and VVPVILLVMFILYMFLHLWMVI.

The protein localises to the membrane. This Ictalurid herpesvirus 1 (strain Auburn) (IcHV-1) protein is Putative membrane protein ORF59 (ORF59).